The chain runs to 131 residues: Superoxide dismutase [Ni] (131 aa).

The propeptide occupies 1 to 14 (MLSRLFAPKVTVSA). Ni(2+)-binding residues include H15, C16, and C20.

This sequence belongs to the nickel superoxide dismutase family. Homohexamer. The hexameric protein has a roughly the shape of a hollow sphere with an outer diameter of 60 angstroms and a large interior cavity. The cofactor is Ni(2+).

The protein resides in the cytoplasm. The catalysed reaction is 2 superoxide + 2 H(+) = H2O2 + O2. In Streptomyces coelicolor (strain ATCC BAA-471 / A3(2) / M145), this protein is Superoxide dismutase [Ni] (sodN).